We begin with the raw amino-acid sequence, 127 residues long: Probable tautomerase YusQ (127 aa).

The active-site Proton acceptor; via imino nitrogen is Pro2.

This sequence belongs to the 4-oxalocrotonate tautomerase family.

This Bacillus subtilis (strain 168) protein is Probable tautomerase YusQ (yusQ).